Reading from the N-terminus, the 176-residue chain is Negative modulator of initiation of replication (176 aa).

The protein belongs to the SeqA family. In terms of assembly, homodimer. Polymerizes to form helical filaments.

It is found in the cytoplasm. Functionally, negative regulator of replication initiation, which contributes to regulation of DNA replication and ensures that replication initiation occurs exactly once per chromosome per cell cycle. Binds to pairs of hemimethylated GATC sequences in the oriC region, thus preventing assembly of replication proteins and re-initiation at newly replicated origins. Repression is relieved when the region becomes fully methylated. The polypeptide is Negative modulator of initiation of replication (Hamiltonella defensa subsp. Acyrthosiphon pisum (strain 5AT)).